The primary structure comprises 492 residues: Catalase isozyme 2 (492 aa).

Catalysis depends on residues histidine 65 and asparagine 138. Tyrosine 348 contacts heme.

The protein belongs to the catalase family. As to quaternary structure, homotetramer. Heme serves as cofactor.

The protein resides in the peroxisome. It carries out the reaction 2 H2O2 = O2 + 2 H2O. Its function is as follows. Occurs in almost all aerobically respiring organisms and serves to protect cells from the toxic effects of hydrogen peroxide. The sequence is that of Catalase isozyme 2 (CAT2) from Nicotiana plumbaginifolia (Leadwort-leaved tobacco).